An 886-amino-acid chain; its full sequence is Putative respiratory burst oxidase homolog protein H (886 aa).

Disordered stretches follow at residues 1 to 46 (MKSN…KKNA) and 64 to 103 (WRKS…TTSS). At 1–316 (MKSNTPTEDS…AELMHENWKK (316 aa)) the chain is on the cytoplasmic side. Polar residues predominate over residues 64-78 (WRKSGNLGSPSTRKS). 2 EF-hand-like regions span residues 137–145 (SVDGKLPKE) and 171–183 (RQIE…DKEQ). EF-hand domains follow at residues 195–230 (DLDC…SASA) and 239–274 (NAAA…MVTN). Positions 208, 210, 212, 214, and 219 each coordinate Ca(2+). A Phosphoserine modification is found at Ser283. Residues 317-337 (LWVLALWAIINVYLFMWKYEE) traverse the membrane as a helical segment. Topologically, residues 338-404 (FMRNPLYNIT…INFHKVIAYM (67 aa)) are extracellular. Residues 355–512 (KGAAETLKLN…LLVLAYILLI (158 aa)) enclose the Ferric oxidoreductase domain. A helical transmembrane segment spans residues 405–421 (IAFQALLHTALHIFCNY). Residues 422-456 (PRLSSCSYDVFLTYAGAALGNTQPSYLGLMLTSVS) lie on the Cytoplasmic side of the membrane. The chain crosses the membrane as a helical span at residues 457 to 477 (ITGVLMIFFMGFSFTLAMHYF). At 478–499 (RRNIVKLPKPFNVLAGFNAFWY) the chain is on the extracellular side. The chain crosses the membrane as a helical span at residues 500-520 (AHHLLVLAYILLIIHGYYLII). At 521–528 (EKPWYQKT) the chain is on the cytoplasmic side. The helical transmembrane segment at 529 to 546 (TWMYLAVPMLFYASERLF) threads the bilayer. The Extracellular segment spans residues 547 to 688 (SRLLQEHSHR…PYGAPAQNYQ (142 aa)). Residues 552 to 686 (EHSHRVNVIK…KGPYGAPAQN (135 aa)) enclose the FAD-binding FR-type domain. A helical transmembrane segment spans residues 689–709 (KFDILLLVGLGIGATPFISIL). The Cytoplasmic portion of the chain corresponds to 710–886 (KDMLNHLKPG…TRFTFHKENF (177 aa)).

It belongs to the RBOH (TC 5.B.1.3) family. Monomer and homodimer.

It localises to the membrane. Its function is as follows. Calcium-dependent NADPH oxidase that generates superoxide. The polypeptide is Putative respiratory burst oxidase homolog protein H (RBOHH) (Arabidopsis thaliana (Mouse-ear cress)).